Reading from the N-terminus, the 192-residue chain is Erythropoietin (192 aa).

Residues 1 to 26 (MGVPDCLALPLLVTFLLLSLGLPVLG) form the signal peptide. A disulfide bond links cysteine 33 and cysteine 187. Asparagine 50, asparagine 64, and asparagine 109 each carry an N-linked (GlcNAc...) asparagine glycan.

This sequence belongs to the EPO/TPO family.

The protein localises to the secreted. Hormone involved in the regulation of erythrocyte proliferation and differentiation and the maintenance of a physiological level of circulating erythrocyte mass. Binds to EPOR leading to EPOR dimerization and JAK2 activation thereby activating specific downstream effectors, including STAT1 and STAT3. This Nannospalax galili (Northern Israeli blind subterranean mole rat) protein is Erythropoietin (EPO).